Consider the following 432-residue polypeptide: DnaJ-like protein 1 (432 aa).

The J domain occupies 4–73 (DTEYYDLLGV…RAKYDKYGRK (70 aa)). A disordered region spans residues 117–187 (NAEDEAEKEK…KKNEQVGAEA (71 aa)).

The protein belongs to the DnaJ family. In terms of assembly, interacts with SLN1.

It is found in the cytoplasm. In terms of biological role, required for peroxisomal protein import which maintains the function of peroxisomes. The protein is DnaJ-like protein 1 (DJP1) of Saccharomyces cerevisiae (strain ATCC 204508 / S288c) (Baker's yeast).